Consider the following 745-residue polypeptide: AMP deaminase 1 (745 aa).

Phosphothreonine is present on Thr79. A Phosphoserine modification is found at Ser83. Residue Tyr214 is modified to Phosphotyrosine. Zn(2+)-binding residues include His301 and His303. Substrate-binding positions include His303 and 372-377 (KFNDKY). Ser439 is modified (phosphoserine). His570 lines the Zn(2+) pocket. Glu573 serves as a coordination point for substrate. Catalysis depends on His592, which acts as the Proton acceptor. Asp647 is a binding site for Zn(2+). Residue 648–651 (DPMQ) coordinates substrate.

This sequence belongs to the metallo-dependent hydrolases superfamily. Adenosine and AMP deaminases family. As to quaternary structure, homotetramer. The cofactor is Zn(2+).

The enzyme catalyses AMP + H2O + H(+) = IMP + NH4(+). The protein operates within purine metabolism; IMP biosynthesis via salvage pathway; IMP from AMP: step 1/1. AMP deaminase plays a critical role in energy metabolism. The chain is AMP deaminase 1 from Mus musculus (Mouse).